The primary structure comprises 831 residues: AMP deaminase (831 aa).

3 disordered regions span residues N26–P45, N66–N110, and N130–T149. Phosphoserine is present on residues S79 and S84. Residues H319 and H321 each contribute to the Zn(2+) site. Residues H321 and K390–Y395 each bind substrate. H587 contributes to the Zn(2+) binding site. Residue E590 coordinates substrate. Residue H609 is the Proton acceptor of the active site. A Zn(2+)-binding site is contributed by D664. Substrate is bound at residue D665 to Q668. A phosphoserine mark is found at S758, S776, S780, and S782.

This sequence belongs to the metallo-dependent hydrolases superfamily. Adenosine and AMP deaminases family. As to quaternary structure, homotetramer. It depends on Zn(2+) as a cofactor.

It localises to the cytoplasm. The catalysed reaction is AMP + H2O + H(+) = IMP + NH4(+). The protein operates within purine metabolism; IMP biosynthesis via salvage pathway; IMP from AMP: step 1/1. In terms of biological role, AMP deaminase plays a critical role in energy metabolism. The sequence is that of AMP deaminase (ada1) from Schizosaccharomyces pombe (strain 972 / ATCC 24843) (Fission yeast).